The sequence spans 131 residues: Large ribosomal subunit protein bL17 (131 aa).

The protein belongs to the bacterial ribosomal protein bL17 family. As to quaternary structure, part of the 50S ribosomal subunit. Contacts protein L32.

The polypeptide is Large ribosomal subunit protein bL17 (Shewanella violacea (strain JCM 10179 / CIP 106290 / LMG 19151 / DSS12)).